Here is a 538-residue protein sequence, read N- to C-terminus: Chaperonin GroEL (538 aa).

ATP contacts are provided by residues T30–P33, D87–T91, G415, D479–A481, and D495.

The protein belongs to the chaperonin (HSP60) family. In terms of assembly, forms a cylinder of 14 subunits composed of two heptameric rings stacked back-to-back. Interacts with the co-chaperonin GroES.

The protein localises to the cytoplasm. It catalyses the reaction ATP + H2O + a folded polypeptide = ADP + phosphate + an unfolded polypeptide.. Its function is as follows. Together with its co-chaperonin GroES, plays an essential role in assisting protein folding. The GroEL-GroES system forms a nano-cage that allows encapsulation of the non-native substrate proteins and provides a physical environment optimized to promote and accelerate protein folding. The protein is Chaperonin GroEL of Dictyoglomus thermophilum (strain ATCC 35947 / DSM 3960 / H-6-12).